A 1742-amino-acid chain; its full sequence is Complement C4 (1742 aa).

Residues 1–19 (MRLLWGLLWAFGLFASSLQ) form the signal peptide. N-linked (GlcNAc...) asparagine glycosylation is present at N60. The cysteines at positions 68 and 97 are disulfide-linked. N226 carries an N-linked (GlcNAc...) asparagine glycan. Cysteines 634 and 668 form a disulfide. The propeptide occupies 675–678 (RKKR). 3 disulfide bridges follow: C701-C727, C702-C734, and C715-C735. The region spanning 701-735 (CCQDGLTRLPMVRSCEQRAARVLQPACREPFLSCC) is the Anaphylatoxin-like domain. N-linked (GlcNAc...) asparagine glycosylation is present at N861. Positions 1007 to 1010 (CGEQ) form a cross-link, isoglutamyl cysteine thioester (Cys-Gln). N1325 and N1388 each carry an N-linked (GlcNAc...) asparagine glycan. 3 positions are modified to sulfotyrosine: Y1414, Y1418, and Y1420. Positions 1445–1451 (RRNRRRR) are excised as a propeptide. Disulfide bonds link C1469–C1533, C1581–C1586, C1593–C1671, C1616–C1740, and C1716–C1725. The NTR domain occupies 1593-1740 (CPRQRRALER…FIQEYSTLGC (148 aa)).

As to quaternary structure, in absence of complement activation, circulates in blood as a disulfide-linked trimer of an alpha, beta and gamma chain. In terms of assembly, complement C4b is composed of complement C4b-A, complement C4 beta and complement C4 gamma chains that are associated via disulfide bonds. Non-enzymatic component of the C3 convertase, also named C4bC2b, composed of the serine protease complement C2b (C2), as well as complement C4b. Non-enzymatic component of the C5 convertase, also named C4bC2bC3b, composed of the serine protease complement C2b (C2), complement C3b, as well as complement C4b. Prior to secretion, the single-chain precursor is enzymatically cleaved by plasminogen (PLG) to yield non-identical chains alpha, beta and gamma. During activation of the complement systems, the alpha chain is cleaved into C4a and C4b by different proteases depending on the complement pathway: C4b stays linked to the beta and gamma chains, while C4a is released in the plasma. The alpha chain is cleaved by C1S to generate C4a and C4b following activation by the classical complement system. The alpha chain is cleaved to generate C4a and C4b by MASP2 following activation by the lectin complement system. The alpha chain is cleaved by GZMK to generate C4a and C4b following activation by the GZMK complement system. Further degradation of C4b by C1 into the inactive fragments C4c and C4d blocks the generation of C3 convertase. The proteolytic cleavages often are incomplete so that many structural forms can be found in plasma. Post-translationally, upon activation, the internal thioester bond reacts with carbohydrate antigens on the target surface to form amide or ester bonds, leading to covalent association with the surface of pathogens. In terms of processing, complement C4b interacts with complement C3b via a thioester linkage. N- and O-glycosylated. O-glycosylated with a core 1 or possibly core 8 glycan.

The protein resides in the secreted. Its subcellular location is the cell surface. Precursor of non-enzymatic components of the classical, lectin and GZMK complement pathways, which consist in a cascade of proteins that leads to phagocytosis and breakdown of pathogens and signaling that strengthens the adaptive immune system. In terms of biological role, non-enzymatic component of C3 and C5 convertases. Generated following cleavage by complement proteases (C1S, MASP2 or GZMK, depending on the complement pathway), it covalently attaches to the surface of pathogens, where it acts as an opsonin that marks the surface of antigens for removal. It then recruits the serine protease complement C2b to form the C3 and C5 convertases, which cleave and activate C3 and C5, respectively, the next components of the complement pathways. Complement C4b-A isotype is responsible for effective binding to form amide bonds with immune aggregates or protein antigens, while complement C4b-B isotype catalyzes the transacylation of the thioester carbonyl group to form ester bonds with carbohydrate antigens. Its function is as follows. Putative humoral mediator released following cleavage by complement proteases (C1S, MASP2 or GZMK, depending on the complement pathway). While it is strongly similar to anaphylatoxins, its role is unclear. Was reported to act as a mediator of local inflammatory process; however these effects were probably due to contamination with C3a and/C5a anaphylatoxins in biological assays. The polypeptide is Complement C4 (Cavia porcellus (Guinea pig)).